The primary structure comprises 550 residues: Mitochondrial distribution and morphology protein 12 (550 aa).

The SMP-LTD domain maps to 1–550 (MSIELNWETL…VYPSFWTFLV (550 aa)). Disordered regions lie at residues 62-168 (ITDP…PQDL), 218-356 (PPQW…TKYR), and 474-493 (TLASPAGAAPGSDEKAGGNT). Positions 69–90 (FYEEDPDVDYDDEDEDVEETHD) are enriched in acidic residues. Low complexity predominate over residues 125–140 (VASSSSSSVGRGSAPR). Polar residues-rich tracts occupy residues 148 to 157 (PTKSNININT), 251 to 269 (PSHSRTSSTVSNADLQTAS), 278 to 289 (TPTSFLRSGQQT), and 296 to 323 (VSTLAPTSVGTSRPPTRDLTTTMSTAQE).

The protein belongs to the MDM12 family. In terms of assembly, component of the ER-mitochondria encounter structure (ERMES) or MDM complex, composed of MMM1, MDM10, MDM12 and MDM34. An MMM1 homodimer associates with one molecule of MDM12 on each side in a pairwise head-to-tail manner, and the SMP-LTD domains of MMM1 and MDM12 generate a continuous hydrophobic tunnel for phospholipid trafficking.

The protein localises to the mitochondrion outer membrane. The protein resides in the endoplasmic reticulum membrane. In terms of biological role, component of the ERMES/MDM complex, which serves as a molecular tether to connect the endoplasmic reticulum (ER) and mitochondria. Components of this complex are involved in the control of mitochondrial shape and protein biogenesis, and function in nonvesicular lipid trafficking between the ER and mitochondria. MDM12 is required for the interaction of the ER-resident membrane protein MMM1 and the outer mitochondrial membrane-resident beta-barrel protein MDM10. The MDM12-MMM1 subcomplex functions in the major beta-barrel assembly pathway that is responsible for biogenesis of all mitochondrial outer membrane beta-barrel proteins, and acts in a late step after the SAM complex. The MDM10-MDM12-MMM1 subcomplex further acts in the TOM40-specific pathway after the action of the MDM12-MMM1 complex. Essential for establishing and maintaining the structure of mitochondria and maintenance of mtDNA nucleoids. The protein is Mitochondrial distribution and morphology protein 12 of Pyricularia oryzae (strain 70-15 / ATCC MYA-4617 / FGSC 8958) (Rice blast fungus).